The primary structure comprises 141 residues: Galactose-6-phosphate isomerase subunit LacA 1 (141 aa).

This sequence belongs to the LacAB/RpiB family. In terms of assembly, heteromultimeric protein consisting of LacA and LacB.

It catalyses the reaction aldehydo-D-galactose 6-phosphate = keto-D-tagatose 6-phosphate. The protein operates within carbohydrate metabolism; D-galactose 6-phosphate degradation; D-tagatose 6-phosphate from D-galactose 6-phosphate: step 1/1. The sequence is that of Galactose-6-phosphate isomerase subunit LacA 1 from Streptococcus pyogenes serotype M1.